Consider the following 279-residue polypeptide: Protease HtpX homolog (279 aa).

Helical transmembrane passes span isoleucine 4–valine 24 and glycine 34–methionine 54. Histidine 140 lines the Zn(2+) pocket. Residue glutamate 141 is part of the active site. Position 144 (histidine 144) interacts with Zn(2+). Helical transmembrane passes span leucine 155 to isoleucine 175 and phenylalanine 189 to tryptophan 209. Glutamate 215 contributes to the Zn(2+) binding site.

It belongs to the peptidase M48B family. Zn(2+) serves as cofactor.

The protein localises to the cell inner membrane. This is Protease HtpX homolog from Neisseria meningitidis serogroup B (strain ATCC BAA-335 / MC58).